Consider the following 298-residue polypeptide: Iron-regulated virulence regulatory protein IrgB (298 aa).

The HTH lysR-type domain occupies 1–59 (MQDLSAVKAFHALCQHKSLTAAAKALEQPKSTLSRRLAQLEEDLGQSLLMRQGNRLTLT). The segment at residues 19-38 (LTAAAKALEQPKSTLSRRLA) is a DNA-binding region (H-T-H motif).

Belongs to the LysR transcriptional regulatory family.

Transcription activation of the irgA gene. In the presence of sufficient iron, transcription of both irgA and irgB is negatively regulated by a fur-like protein. In low iron conditions, negative regulation of transcription is removed, and production of IrgB leads to positive transcriptional activation of irgA. This is Iron-regulated virulence regulatory protein IrgB (irgB) from Vibrio cholerae serotype O1 (strain ATCC 39541 / Classical Ogawa 395 / O395).